A 490-amino-acid polypeptide reads, in one-letter code: ATP-dependent 6-phosphofructokinase (490 aa).

Residues Gly-109, 175–176, and 200–203 contribute to the ATP site; these read RG and GDGT. Residue Asp-201 participates in Mg(2+) binding. Substrate contacts are provided by residues 229 to 231, 274 to 276, Glu-327, and 383 to 386; these read TID, MGR, and YMIR. The active-site Proton acceptor is the Asp-231. The Peroxisomal targeting signal signature appears at 488–490; sequence SKL.

The protein belongs to the phosphofructokinase type A (PFKA) family. PPi-dependent PFK group II subfamily. Atypical ATP-dependent clade 'X' sub-subfamily. Homotetramer. Mg(2+) serves as cofactor.

The protein resides in the glycosome. It catalyses the reaction beta-D-fructose 6-phosphate + ATP = beta-D-fructose 1,6-bisphosphate + ADP + H(+). The protein operates within carbohydrate degradation; glycolysis; D-glyceraldehyde 3-phosphate and glycerone phosphate from D-glucose: step 3/4. With respect to regulation, allosterically activated by AMP. Its function is as follows. Catalyzes the phosphorylation of D-fructose 6-phosphate to fructose 1,6-bisphosphate by ATP, the first committing step of glycolysis. The protein is ATP-dependent 6-phosphofructokinase of Trypanoplasma borreli.